Reading from the N-terminus, the 301-residue chain is Methionyl-tRNA formyltransferase (301 aa).

Residue 109 to 112 coordinates (6S)-5,6,7,8-tetrahydrofolate; that stretch reads SILP.

It belongs to the Fmt family.

The catalysed reaction is L-methionyl-tRNA(fMet) + (6R)-10-formyltetrahydrofolate = N-formyl-L-methionyl-tRNA(fMet) + (6S)-5,6,7,8-tetrahydrofolate + H(+). Functionally, attaches a formyl group to the free amino group of methionyl-tRNA(fMet). The formyl group appears to play a dual role in the initiator identity of N-formylmethionyl-tRNA by promoting its recognition by IF2 and preventing the misappropriation of this tRNA by the elongation apparatus. The protein is Methionyl-tRNA formyltransferase of Campylobacter curvus (strain 525.92).